We begin with the raw amino-acid sequence, 148 residues long: RING finger protein 24 (148 aa).

Residues 24–44 form a helical membrane-spanning segment; that stretch reads IYIVVFGTAIFVFILSLLFCC. The RING-type zinc finger occupies 78 to 119; that stretch reads CAVCLEDFKPRDELGICPCKHAFHRKCLIKWLEVRKVCPLCN.

Interacts with TRPC1, TRPC3, TRPC4, TRPC5, TRPC6 and TRPC7.

It is found in the golgi apparatus membrane. May play a role in TRPCs intracellular trafficking. The chain is RING finger protein 24 (RNF24) from Homo sapiens (Human).